The primary structure comprises 484 residues: MKLIVKVFPEITIKSRPVRKRFIRQLGKNIRNVLKDLDPELAVDGVWDNLEVVTRVEDEKVQREMIERLTCTPGITHFLQVEEYPLGDFDDIVAKCKHHFGHLLAGKHFAVRCKRGGHHDFTSMDVDRYVGSQLRQQCGAAGIELKKPEVLVRIEIRDQRLYVIHNQHNGIGGYPLGALEQTLVLMSGGFDSTVAAYQMMRRGLMTHFCFFNLGGRAHELGVMEVAHYLWKKYGSSQRVLFISVPFEEVVGEILNKVDNSYMGVTLKRMMLRGAAHMADRLQIDALVTGEAISQVSSQTLPNLSIIDSATDKLVLRPLLASHKQDIIDQATEIGTADFAKHMPEYCGVISVNPTTHAKRHRMEHEEKQFDMAVLERALERAKFISIDHVIDELGKDIEIEEVAEALPGQIVIDIRHPDAQEDEPLVLEGIEVQAMPFYAINSKFKHLDPTRQYLLYCDKGVMSRLHAHHLLSEGHANVRVYRPT.

Residues 63 to 167 enclose the THUMP domain; sequence REMIERLTCT…DQRLYVIHNQ (105 aa). Residues 185–186, Lys267, Gly289, and Gln298 contribute to the ATP site; that span reads LM. Residues Cys346 and Cys457 are joined by a disulfide bond. A Rhodanese domain is found at 405-483; the sequence is ALPGQIVIDI…GHANVRVYRP (79 aa). Catalysis depends on Cys457, which acts as the Cysteine persulfide intermediate.

It belongs to the ThiI family.

Its subcellular location is the cytoplasm. The enzyme catalyses [ThiI sulfur-carrier protein]-S-sulfanyl-L-cysteine + a uridine in tRNA + 2 reduced [2Fe-2S]-[ferredoxin] + ATP + H(+) = [ThiI sulfur-carrier protein]-L-cysteine + a 4-thiouridine in tRNA + 2 oxidized [2Fe-2S]-[ferredoxin] + AMP + diphosphate. It catalyses the reaction [ThiS sulfur-carrier protein]-C-terminal Gly-Gly-AMP + S-sulfanyl-L-cysteinyl-[cysteine desulfurase] + AH2 = [ThiS sulfur-carrier protein]-C-terminal-Gly-aminoethanethioate + L-cysteinyl-[cysteine desulfurase] + A + AMP + 2 H(+). It participates in cofactor biosynthesis; thiamine diphosphate biosynthesis. Its function is as follows. Catalyzes the ATP-dependent transfer of a sulfur to tRNA to produce 4-thiouridine in position 8 of tRNAs, which functions as a near-UV photosensor. Also catalyzes the transfer of sulfur to the sulfur carrier protein ThiS, forming ThiS-thiocarboxylate. This is a step in the synthesis of thiazole, in the thiamine biosynthesis pathway. The sulfur is donated as persulfide by IscS. The chain is tRNA sulfurtransferase from Pseudomonas putida (strain ATCC 47054 / DSM 6125 / CFBP 8728 / NCIMB 11950 / KT2440).